The following is a 439-amino-acid chain: 3-phosphoshikimate 1-carboxyvinyltransferase (439 aa).

Residues lysine 27, serine 28, and arginine 32 each coordinate 3-phosphoshikimate. Residue lysine 27 coordinates phosphoenolpyruvate. Phosphoenolpyruvate-binding residues include glycine 101 and arginine 130. The 3-phosphoshikimate site is built by serine 175, glutamine 177, aspartate 326, and lysine 353. A phosphoenolpyruvate-binding site is contributed by glutamine 177. Aspartate 326 serves as the catalytic Proton acceptor. 2 residues coordinate phosphoenolpyruvate: arginine 357 and arginine 399.

It belongs to the EPSP synthase family. As to quaternary structure, monomer.

It localises to the cytoplasm. The enzyme catalyses 3-phosphoshikimate + phosphoenolpyruvate = 5-O-(1-carboxyvinyl)-3-phosphoshikimate + phosphate. Its pathway is metabolic intermediate biosynthesis; chorismate biosynthesis; chorismate from D-erythrose 4-phosphate and phosphoenolpyruvate: step 6/7. Functionally, catalyzes the transfer of the enolpyruvyl moiety of phosphoenolpyruvate (PEP) to the 5-hydroxyl of shikimate-3-phosphate (S3P) to produce enolpyruvyl shikimate-3-phosphate and inorganic phosphate. The protein is 3-phosphoshikimate 1-carboxyvinyltransferase of Synechococcus sp. (strain CC9311).